The following is a 290-amino-acid chain: NAD kinase (290 aa).

Asp72 acts as the Proton acceptor in catalysis. NAD(+) contacts are provided by residues 72 to 73 (DG), Lys77, 145 to 146 (NE), Asp175, 186 to 191 (TAYSLS), and Ala210.

It belongs to the NAD kinase family. The cofactor is a divalent metal cation.

It localises to the cytoplasm. It carries out the reaction NAD(+) + ATP = ADP + NADP(+) + H(+). Functionally, involved in the regulation of the intracellular balance of NAD and NADP, and is a key enzyme in the biosynthesis of NADP. Catalyzes specifically the phosphorylation on 2'-hydroxyl of the adenosine moiety of NAD to yield NADP. This Bacteroides fragilis (strain YCH46) protein is NAD kinase.